The primary structure comprises 91 residues: Lactococcin-B immunity protein (91 aa).

Functionally, imparts immunity to lactococcin-B to naturally sensitive host strains. The protein is Lactococcin-B immunity protein (lciB) of Lactococcus lactis subsp. cremoris (Streptococcus cremoris).